We begin with the raw amino-acid sequence, 306 residues long: Serine/threonine-protein phosphatase PP2A-2 catalytic subunit (306 aa).

Positions 54, 56, 82, and 114 each coordinate Mn(2+). H115 acts as the Proton donor in catalysis. Mn(2+)-binding residues include H164 and H238. L306 is subject to Leucine methyl ester.

Belongs to the PPP phosphatase family. PP-2A subfamily. As to quaternary structure, PP2A consists of a common heterodimeric core enzyme, composed of a 36 kDa catalytic subunit (subunit C) and a 65 kDa constant regulatory subunit (subunit A), that associates with a variety of regulatory subunits such as subunits B (the R2/B/PR55/B55, R3/B''/PR72/PR130/PR59 and R5/B'/B56 families). Interacts with B'THETA. Interacts with HDA14. Interacts with SRK2E/OST1. Interacts with TAP46. It depends on Mn(2+) as a cofactor. Post-translationally, reversibly methyl esterified on Leu-306 by leucine carboxyl methyltransferase 1 (LCMT1) and pectin methylesterase 1 (PME1). Carboxyl methylation influences the affinity of the catalytic subunit for the different regulatory subunits, thereby modulating the PP2A holoenzyme's substrate specificity, enzyme activity and cellular localization. In terms of processing, phosphorylation of either threonine (by autophosphorylation-activated protein kinase) or tyrosine results in inactivation of the phosphatase. Auto-dephosphorylation has been suggested as a mechanism for reactivation. In terms of tissue distribution, expressed in root meristem, emerging lateral roots, leaf vasculature, stipules, guard cells, anthers and pollen grains.

The protein localises to the cytoplasm. It localises to the cytosol. The protein resides in the nucleus. It is found in the peroxisome. The catalysed reaction is O-phospho-L-seryl-[protein] + H2O = L-seryl-[protein] + phosphate. The enzyme catalyses O-phospho-L-threonyl-[protein] + H2O = L-threonyl-[protein] + phosphate. Functionally, dephosphorylates and activates the actin-depolymerizing factor ADF1, which, in turn, regulates actin cytoskeleton remodeling and is involved in the blue light photoreceptor PHOT2-mediated chloroplast avoidance movements. Associates with the serine/threonine-protein phosphatase PP2A regulatory subunits A and B' to positively regulates beta-oxidation of fatty acids and protoauxins in peroxisomes by dephosphorylating peroxisomal beta-oxidation-related proteins. Acts as a negative regulator of abscisic acid (ABA) signaling. May regulate ABA-dependent gene expression. Involved in the light-dependent activation of nitrate reductase. The protein is Serine/threonine-protein phosphatase PP2A-2 catalytic subunit of Arabidopsis thaliana (Mouse-ear cress).